The sequence spans 402 residues: Protein FAM221B (402 aa).

Residues 1-35 (MEAHEIIEEPHITMDAEKHPPSKDPSAEDLQENHI) are compositionally biased toward basic and acidic residues. Disordered regions lie at residues 1–205 (MEAH…TARP) and 378–402 (DTQK…HRPL). 2 stretches are compositionally biased toward polar residues: residues 77-90 (EPSI…TPTY) and 393-402 (DTVSNWHRPL).

It belongs to the FAM221 family.

The polypeptide is Protein FAM221B (FAM221B) (Homo sapiens (Human)).